The primary structure comprises 438 residues: Transposon Ty2-OR2 Gag polyprotein (438 aa).

Disordered regions lie at residues 1–88 (MESQ…YQQH), 365–397 (NVSR…AKAH), and 419–438 (SSQY…TERI). Polar residues-rich tracts occupy residues 19–39 (ASVT…SASN) and 49–60 (KVNSQEETTPGT). Positions 295–397 (ENNINVSDRL…SSKPRAAKAH (103 aa)) are RNA-binding. Residues 369 to 381 (TSPNTTNTKVTTR) show a composition bias toward low complexity.

In terms of assembly, homotrimer.

It localises to the cytoplasm. In terms of biological role, capsid protein (CA) is the structural component of the virus-like particle (VLP), forming the shell that encapsulates the retrotransposons dimeric RNA genome. The particles are assembled from trimer-clustered units and there are holes in the capsid shells that allow for the diffusion of macromolecules. CA also has nucleocapsid-like chaperone activity, promoting primer tRNA(i)-Met annealing to the multipartite primer-binding site (PBS), dimerization of Ty2 RNA and initiation of reverse transcription. This is Transposon Ty2-OR2 Gag polyprotein (TY2A-OR2) from Saccharomyces cerevisiae (strain ATCC 204508 / S288c) (Baker's yeast).